A 191-amino-acid polypeptide reads, in one-letter code: Protein YceI (191 aa).

The signal sequence occupies residues 1–22 (MKKSLLGLTFASLMFSAGSAVA).

The protein belongs to the UPF0312 family. Type 1 subfamily.

It is found in the periplasm. The chain is Protein YceI from Shigella flexneri.